A 143-amino-acid polypeptide reads, in one-letter code: Transcriptional regulator MraZ (143 aa).

SpoVT-AbrB domains are found at residues 5 to 47 (EYRH…PQSE) and 76 to 119 (ASEC…SKTL).

The protein belongs to the MraZ family. In terms of assembly, forms oligomers.

The protein resides in the cytoplasm. It localises to the nucleoid. The polypeptide is Transcriptional regulator MraZ (Shouchella clausii (strain KSM-K16) (Alkalihalobacillus clausii)).